Reading from the N-terminus, the 452-residue chain is cAMP/cGMP-dependent 3',5'-cAMP/cGMP phosphodiesterase A (452 aa).

Residues 1–23 (MALNKKLISLLLLIFIILNIVNS) form the signal peptide. Residues 24 to 49 (HQQEDCDDDDEDIGISAERSERRSVK) constitute a propeptide that is removed on maturation. N-linked (GlcNAc...) asparagine glycosylation is found at N101, N141, and N277.

It belongs to the cyclic nucleotide phosphodiesterase class-II family.

It localises to the secreted. Its subcellular location is the extracellular space. It is found in the cell surface. It catalyses the reaction 3',5'-cyclic AMP + H2O = AMP + H(+). The catalysed reaction is 3',5'-cyclic GMP + H2O = GMP + H(+). With respect to regulation, inhibited by dithiotreitol (DTT). In terms of biological role, phosphodiesterase which displays a preference for cAMP over cGMP. Involved in the degradation of extracellular cAMP. Maintains the responsiveness of cells to the chemoattractant cAMP during the aggregation phase of development. This is cAMP/cGMP-dependent 3',5'-cAMP/cGMP phosphodiesterase A (pdsA) from Dictyostelium discoideum (Social amoeba).